The following is a 4882-amino-acid chain: Dual E2 ubiquitin-conjugating enzyme/E3 ubiquitin-protein ligase BIRC6 (4882 aa).

WD repeat units lie at residues Asp71 to Ala109 and Leu110 to Cys139. The stretch at Arg292 to Lys362 is one BIR repeat. Positions 331, 334, 351, and 358 each coordinate Zn(2+). The WD 3 repeat unit spans residues Leu382 to Ile429. 3 disordered regions span residues Asp468 to Glu502, Gly542 to Glu561, and Ala582 to Asn622. Residues Asp475–Ser485 show a composition bias toward acidic residues. A phosphoserine mark is found at Ser476, Ser483, and Ser485. WD repeat units lie at residues Met504–Leu723, Thr733–Lys854, Asp855–Glu931, and Pro932–Ile970. Residues Lys551–Glu561 show a composition bias toward basic and acidic residues. A compositionally biased stretch (polar residues) spans Ala582 to His591. A phosphoserine mark is found at Ser584 and Ser593. Polar residues predominate over residues Ser598–Asn622. The interval Gln1057–His1077 is disordered. Positions Arg1060–Gln1069 are enriched in basic residues. Residue Thr1724 is modified to Phosphothreonine. Phosphoserine is present on residues Ser2245 and Ser2978. The interval Val2969–Gly2998 is disordered. Positions His3212–Arg3216 are HRRAR loop; important for DIABLO/SMAC and HTRA2 binding. In terms of domain architecture, Ubiquitin-like spans Asp3842–Gln4092. Disordered regions lie at residues Ser3908–Ala3927 and Leu3943–Ala3973. Position 3954 is a phosphothreonine (Thr3954). A Phosphoserine modification is found at Ser4047. The tract at residues Val4285–Thr4304 is disordered. The span at Pro4286–Thr4304 shows a compositional bias: polar residues. A UBC core domain is found at Ala4598 to Met4765. Cys4691 acts as the Glycyl thioester intermediate in catalysis. Residues Ala4857–Leu4882 form a disordered region. The span at Asn4869–Leu4882 shows a compositional bias: polar residues.

The protein belongs to the BIRC6 family. In terms of assembly, homodimer; antiparallel. Interacts with DIABLO/SMAC, likely with higher affinity to SMAC dimer than SMAC monomer; this interaction blocks the substrate-binding site and inhibits the caspase inhibition activity of BIRC6. Interacts with RNF41, KIF23/MKLP1, USP8/UBPY, BIRC5/survivin, MAP2K1/MEK1, RAB8A/RAB8, RAB11A/RAB11, PLK1, EXOC3/SEC6 and EXOC4/SEC8. In terms of processing, ubiquitinated. Ubiquitination is mediated by RNF41 E3 ligase and leads to proteasomal degradation, impairing inhibition of apoptosis. Deubiquitinated by USP8/UBPY. Autoubiquitinated; mediated by E1 ubiquitin activating enzyme UBA6. Post-translationally, proteolytically cleaved. Acts as substrate for CASP3, CASP6, CASP7, CASP9 and HTRA2. As to expression, widely expressed. Highly expressed in the brain and kidney.

Its subcellular location is the golgi apparatus. It localises to the trans-Golgi network membrane. It is found in the endosome. The protein localises to the cytoplasm. The protein resides in the cytoskeleton. Its subcellular location is the spindle pole. It localises to the microtubule organizing center. It is found in the centrosome. The protein localises to the midbody. The protein resides in the midbody ring. It catalyses the reaction S-ubiquitinyl-[E1 ubiquitin-activating enzyme]-L-cysteine + [acceptor protein]-L-lysine = [E1 ubiquitin-activating enzyme]-L-cysteine + N(6)-monoubiquitinyl-[acceptor protein]-L-lysine.. Inhibited by DIABLO/SMAC, which competes for the substrate-binding sites on BIRC6. BIRC6 inhibits caspases and protease by ubiquitination but BIRC6 itself is subjected to protease cleavage by CASP3, CASP6, CASP7, CASP9 and HTRA2 by protease cleavage. Its function is as follows. Anti-apoptotic protein known as inhibitor of apoptosis (IAP) which can regulate cell death by controlling caspases and by acting as an E3 ubiquitin-protein ligase. Unlike most IAPs, does not contain a RING domain and it is not a RING-type E3 ligase. Instead acts as a dual E2/E3 enzyme that combines ubiquitin conjugating (E2) and ubiquitin ligase (E3) activities in a single polypeptide. Ubiquitination is mediated by a non-canonical E1 ubiquitin activating enzyme UBA6. Ubiquitinates CASP3, CASP7 and CASP9 and inhibits their caspase activity; also ubiquitinates their procaspases but to a weaker extent. Ubiquitinates pro-apoptotic factors DIABLO/SMAC and HTRA2. DIABLO/SMAC antagonizes the caspase inhibition activity of BIRC6 by competing for the same binding sites as the caspases. Ubiquitinates the autophagy protein MAP1LC3B; this activity is also inhibited by DIABLO/SMAC. Important regulator for the final stages of cytokinesis. Crucial for normal vesicle targeting to the site of abscission, but also for the integrity of the midbody and the midbody ring, and its striking ubiquitin modification. Required for normal placenta development. This Mus musculus (Mouse) protein is Dual E2 ubiquitin-conjugating enzyme/E3 ubiquitin-protein ligase BIRC6 (Birc6).